Reading from the N-terminus, the 256-residue chain is Gamma carbonic anhydrase-like 2, mitochondrial (256 aa).

A mitochondrion-targeting transit peptide spans 1–33; sequence MATSLARISKRSITSAVSSNLIRRYFAAEAVAV. Substrate-binding positions include 103–105 and 118–119; these read RGD and QE. Residue H124 participates in Zn(2+) binding. R152, Q164, and Y231 together coordinate substrate.

It belongs to the gamma-class carbonic anhydrase family. As to quaternary structure, component of the mitochondrial oxidoreductase respiratory chain complex I; element of the extra matrix-exposed domain, which is attached to the membrane arm of this complex. Interacts with GAMMACA2.

Its subcellular location is the mitochondrion membrane. Its function is as follows. Involved in complex I assembly in mitochondria and respiration. In Arabidopsis thaliana (Mouse-ear cress), this protein is Gamma carbonic anhydrase-like 2, mitochondrial (GAMMACAL2).